A 115-amino-acid chain; its full sequence is Toxin-like structure LSTX-D1 (115 aa).

The signal sequence occupies residues 1–22; that stretch reads MKVLVLFSVLFLTLFSYSSTEA. A propeptide spanning residues 23–44 is cleaved from the precursor; that stretch reads IDEFDSDAEEDMLSLMANEQVR. 4 cysteine pairs are disulfide-bonded: C48–C63, C55–C72, C62–C87, and C74–C85.

The protein belongs to the neurotoxin 19 (CSTX) family. 01 subfamily. Expressed by the venom gland.

It localises to the secreted. The protein is Toxin-like structure LSTX-D1 of Lycosa singoriensis (Wolf spider).